A 601-amino-acid polypeptide reads, in one-letter code: Elongation factor 4 (601 aa).

One can recognise a tr-type G domain in the interval 4-186 (SFIRNFAIIA…SIVHLVPPPK (183 aa)). Residues 16 to 21 (DHGKST) and 133 to 136 (NKID) each bind GTP.

It belongs to the TRAFAC class translation factor GTPase superfamily. Classic translation factor GTPase family. LepA subfamily.

Its subcellular location is the cell inner membrane. It catalyses the reaction GTP + H2O = GDP + phosphate + H(+). Functionally, required for accurate and efficient protein synthesis under certain stress conditions. May act as a fidelity factor of the translation reaction, by catalyzing a one-codon backward translocation of tRNAs on improperly translocated ribosomes. Back-translocation proceeds from a post-translocation (POST) complex to a pre-translocation (PRE) complex, thus giving elongation factor G a second chance to translocate the tRNAs correctly. Binds to ribosomes in a GTP-dependent manner. The chain is Elongation factor 4 from Koribacter versatilis (strain Ellin345).